A 510-amino-acid polypeptide reads, in one-letter code: 2,3-bisphosphoglycerate-independent phosphoglycerate mutase (510 aa).

Mn(2+) contacts are provided by aspartate 13 and serine 63. Serine 63 serves as the catalytic Phosphoserine intermediate. Substrate-binding positions include histidine 124, 154–155 (RD), arginine 186, arginine 192, 262–265 (RADR), and lysine 334. Residues aspartate 401, histidine 405, aspartate 442, histidine 443, and histidine 461 each contribute to the Mn(2+) site.

This sequence belongs to the BPG-independent phosphoglycerate mutase family. In terms of assembly, monomer. The cofactor is Mn(2+).

The catalysed reaction is (2R)-2-phosphoglycerate = (2R)-3-phosphoglycerate. Its pathway is carbohydrate degradation; glycolysis; pyruvate from D-glyceraldehyde 3-phosphate: step 3/5. In terms of biological role, catalyzes the interconversion of 2-phosphoglycerate and 3-phosphoglycerate. This is 2,3-bisphosphoglycerate-independent phosphoglycerate mutase from Aliivibrio fischeri (strain MJ11) (Vibrio fischeri).